The sequence spans 287 residues: Large ribosomal subunit protein uL2 (287 aa).

The tract at residues arginine 221–serine 287 is disordered. The segment covering lysine 258–serine 287 has biased composition (basic residues).

This sequence belongs to the universal ribosomal protein uL2 family. As to quaternary structure, part of the 50S ribosomal subunit. Forms a bridge to the 30S subunit in the 70S ribosome.

One of the primary rRNA binding proteins. Required for association of the 30S and 50S subunits to form the 70S ribosome, for tRNA binding and peptide bond formation. It has been suggested to have peptidyltransferase activity; this is somewhat controversial. Makes several contacts with the 16S rRNA in the 70S ribosome. The protein is Large ribosomal subunit protein uL2 of Prochlorococcus marinus (strain AS9601).